A 138-amino-acid chain; its full sequence is Basic phospholipase A2 vurtoxin (138 aa).

Positions 1–16 (MRTLWIVAVCLIGVEG) are cleaved as a signal peptide. Disulfide bonds link cysteine 42–cysteine 131, cysteine 44–cysteine 60, cysteine 59–cysteine 111, cysteine 65–cysteine 138, cysteine 66–cysteine 104, cysteine 73–cysteine 97, and cysteine 91–cysteine 102. Residues tyrosine 43, glycine 45, and glycine 47 each contribute to the Ca(2+) site. Residue histidine 63 is part of the active site. Residue aspartate 64 participates in Ca(2+) binding. The active site involves aspartate 105.

Ca(2+) is required as a cofactor. As to expression, expressed by the venom gland.

It is found in the secreted. It catalyses the reaction a 1,2-diacyl-sn-glycero-3-phosphocholine + H2O = a 1-acyl-sn-glycero-3-phosphocholine + a fatty acid + H(+). In terms of biological role, snake venom phospholipase A2 that may have a strong anticoagulant activity. Is able to suppress the acetylcholine (ACh)-evoked current mediated by alpha-7 (CHRNA7)-similar nAChRs in L.stagnalis neurons (IC(50)=10.5 uM) and to compete with alpha-bungarotoxin for binding to muscle- and alpha-7 neuronal nAChR types, as well as to AChBPs. In inhibition of alpha-bungarotoxin binding, this toxin is mostly active against T.californica nAChR (IC(50)=0.26 uM), it is moderately active against human alpha-7 nAChR (IC(50)=14 uM), and is not active against L.stagnalis and A.californica AChBP (IC(50)&gt;30 uM). This chain is Basic phospholipase A2 vurtoxin, found in Vipera renardi (Steppe viper).